Here is a 286-residue protein sequence, read N- to C-terminus: ATP synthase gamma chain (286 aa).

It belongs to the ATPase gamma chain family. As to quaternary structure, F-type ATPases have 2 components, CF(1) - the catalytic core - and CF(0) - the membrane proton channel. CF(1) has five subunits: alpha(3), beta(3), gamma(1), delta(1), epsilon(1). CF(0) has three main subunits: a, b and c.

Its subcellular location is the cell inner membrane. In terms of biological role, produces ATP from ADP in the presence of a proton gradient across the membrane. The gamma chain is believed to be important in regulating ATPase activity and the flow of protons through the CF(0) complex. This is ATP synthase gamma chain from Alteromonas mediterranea (strain DSM 17117 / CIP 110805 / LMG 28347 / Deep ecotype).